The primary structure comprises 427 residues: METFWLRVSFWVALVGGVISDNPESYSTNLSIHVDSVTTFRGTELSFVVTTHQPTNLALPSNGSMHNYCPQQTKITSAFKYINTVISCTIFIVGMVGNATLLRIIYQNKCMRNGPNALIASLALGDLIYVVIDLPINVFKLLAGRWPFEQNDFGVFLCKLFPFLQKSSVGITVLNLCALSVDRYRAVASWSRVQGIGIPLVTAIEIVSIWILSFILAIPEAIGFVMVPFEYKGAQHRTCMLNATSKFMEFYQDVKDWWLFGFYFCMPLVCTAIFYTLMTCEMLNRRNGSLRIALSEHLKQRREVAKTVFCLVVIFALCWFPLHLSRILKKTVYDEMDTNRCELLSFLLLMDYIGINLATMNSCINPIALYFVSKKFKNCFQSCLCCCCYQSKSLMTSVPMNGTSIQWKNPEQNNHNTERSSHKDSIN.

Residues 1-20 (METFWLRVSFWVALVGGVIS) form the signal peptide. Residues 21 to 80 (DNPESYSTNLSIHVDSVTTFRGTELSFVVTTHQPTNLALPSNGSMHNYCPQQTKITSAFK) are Extracellular-facing. 2 N-linked (GlcNAc...) asparagine glycosylation sites follow: Asn29 and Asn62. The helical transmembrane segment at 81 to 102 (YINTVISCTIFIVGMVGNATLL) threads the bilayer. At 103-112 (RIIYQNKCMR) the chain is on the cytoplasmic side. The chain crosses the membrane as a helical span at residues 113 to 132 (NGPNALIASLALGDLIYVVI). Residues 133-159 (DLPINVFKLLAGRWPFEQNDFGVFLCK) are Extracellular-facing. Cys158 and Cys239 are oxidised to a cystine. A helical transmembrane segment spans residues 160 to 181 (LFPFLQKSSVGITVLNLCALSV). At 182–205 (DRYRAVASWSRVQGIGIPLVTAIE) the chain is on the cytoplasmic side. The helical transmembrane segment at 206–229 (IVSIWILSFILAIPEAIGFVMVPF) threads the bilayer. Topologically, residues 230-256 (EYKGAQHRTCMLNATSKFMEFYQDVKD) are extracellular. A helical transmembrane segment spans residues 257-278 (WWLFGFYFCMPLVCTAIFYTLM). Over 279–306 (TCEMLNRRNGSLRIALSEHLKQRREVAK) the chain is Cytoplasmic. Residues 307–328 (TVFCLVVIFALCWFPLHLSRIL) traverse the membrane as a helical segment. Residues 329–347 (KKTVYDEMDTNRCELLSFL) are Extracellular-facing. The chain crosses the membrane as a helical span at residues 348-372 (LLMDYIGINLATMNSCINPIALYFV). Residues 373–427 (SKKFKNCFQSCLCCCCYQSKSLMTSVPMNGTSIQWKNPEQNNHNTERSSHKDSIN) lie on the Cytoplasmic side of the membrane. A compositionally biased stretch (polar residues) spans 405-415 (IQWKNPEQNNH). A disordered region spans residues 405-427 (IQWKNPEQNNHNTERSSHKDSIN). The segment covering 416-427 (NTERSSHKDSIN) has biased composition (basic and acidic residues). Ser425 carries the phosphoserine modification.

It belongs to the G-protein coupled receptor 1 family. Endothelin receptor subfamily. EDNRA sub-subfamily. In terms of assembly, interacts with HDAC7 and KAT5.

The protein resides in the cell membrane. Its function is as follows. Receptor for endothelin-1. Mediates its action by association with G proteins that activate a phosphatidylinositol-calcium second messenger system. The rank order of binding affinities for ET-A is: ET1 &gt; ET2 &gt;&gt; ET3. The chain is Endothelin-1 receptor from Ovis aries (Sheep).